A 179-amino-acid polypeptide reads, in one-letter code: Replication restart protein DnaT (179 aa).

Residues 155-179 (NGGLPKRDVNTVSEPDSQIPPGFRG) form a disordered region.

It belongs to the DnaT family. As to quaternary structure, homooligomerizes. Interacts with PriB. Component of the replication restart primosome. Primosome assembly occurs via a 'hand-off' mechanism. PriA binds to replication forks, subsequently PriB then DnaT bind; DnaT then displaces ssDNA to generate the helicase loading substrate.

Involved in the restart of stalled replication forks, which reloads the replicative helicase on sites other than the origin of replication. Can function in multiple replication restart pathways. Displaces ssDNA from a PriB-ssDNA complex. Probably forms a spiral filament on ssDNA. The protein is Replication restart protein DnaT of Escherichia coli O8 (strain IAI1).